Here is a 526-residue protein sequence, read N- to C-terminus: ATP synthase subunit alpha (526 aa).

171-178 serves as a coordination point for ATP; the sequence is GDRQTGKT.

This sequence belongs to the ATPase alpha/beta chains family. F-type ATPases have 2 components, CF(1) - the catalytic core - and CF(0) - the membrane proton channel. CF(1) has five subunits: alpha(3), beta(3), gamma(1), delta(1), epsilon(1). CF(0) has four main subunits: a(1), b(1), b'(1) and c(9-12).

The protein resides in the cell inner membrane. It catalyses the reaction ATP + H2O + 4 H(+)(in) = ADP + phosphate + 5 H(+)(out). Functionally, produces ATP from ADP in the presence of a proton gradient across the membrane. The alpha chain is a regulatory subunit. The chain is ATP synthase subunit alpha from Chlorobium phaeobacteroides (strain DSM 266 / SMG 266 / 2430).